A 211-amino-acid chain; its full sequence is Envelope protein UL45 homolog (211 aa).

The Intravirion portion of the chain corresponds to 1–46; that stretch reads MMSPTPEDDRDLVVVRGRLRMMDNGAEHDRERRSYTAWPHLCCGCT. Residues 47-67 traverse the membrane as a helical; Signal-anchor for type II membrane protein segment; that stretch reads IGIILTMFVIATTLLLASLFA. The Virion surface segment spans residues 68-211; sequence FSYMSLESGT…SSILSNAIMK (144 aa). N-linked (GlcNAc...) asparagine; by host glycosylation is found at Asn-96 and Asn-133.

It belongs to the herpesviridae HHV-1 UL45 family.

The protein resides in the virion membrane. This Gallid herpesvirus 2 (strain bc-1) (GaHV-2) protein is Envelope protein UL45 homolog (UL45H).